The primary structure comprises 316 residues: Acetyl-coenzyme A carboxylase carboxyl transferase subunit alpha (316 aa).

One can recognise a CoA carboxyltransferase C-terminal domain in the interval 36-290 (KLEQKLDSLK…KQFLVEQLHI (255 aa)).

Belongs to the AccA family. Acetyl-CoA carboxylase is a heterohexamer composed of biotin carboxyl carrier protein (AccB), biotin carboxylase (AccC) and two subunits each of ACCase subunit alpha (AccA) and ACCase subunit beta (AccD).

The protein resides in the cytoplasm. It catalyses the reaction N(6)-carboxybiotinyl-L-lysyl-[protein] + acetyl-CoA = N(6)-biotinyl-L-lysyl-[protein] + malonyl-CoA. Its pathway is lipid metabolism; malonyl-CoA biosynthesis; malonyl-CoA from acetyl-CoA: step 1/1. Component of the acetyl coenzyme A carboxylase (ACC) complex. First, biotin carboxylase catalyzes the carboxylation of biotin on its carrier protein (BCCP) and then the CO(2) group is transferred by the carboxyltransferase to acetyl-CoA to form malonyl-CoA. The chain is Acetyl-coenzyme A carboxylase carboxyl transferase subunit alpha from Protochlamydia amoebophila (strain UWE25).